The following is a 393-amino-acid chain: MPHFLAKLDFKPLKYPLIEGDFCFHKEFLSLKNPTKSCVYASFKDRIFLLQKIRRANDFLIKSEKTTPLKREILKQALRIYSQSFEVISHNLQENSKHASGKKALDLGTFEDFIQKNQAPILAEIGFGSGRHLIELAKNNPTKTCLGIEIHTPSIAQALKQIELLDLKNLHILQGDGRLILESMPNYKCEKIFVHFPVPWNEKKHRRVLSEKFLNEALRVLKPRGFLELRTDDGLYFEDSLKLALKNFQCEIEIKKNAQIPVISKYEARWNKLKKDIYDLRIYSLELNETPFYNHAFDFSFDTITMSEKSVGTILKTKKIIQEGYFVHVCNIYENKGDFLVELSMGDFDWPVRLFVLLTENQIFYLNKSPLKTLNNHKAHLLLQNILSQKGIG.

Residues Glu124, Glu149, and Asp176 each contribute to the S-adenosyl-L-methionine site. Asp232 is a binding site for substrate.

Belongs to the class I-like SAM-binding methyltransferase superfamily. TrmB family.

The catalysed reaction is guanosine(46) in tRNA + S-adenosyl-L-methionine = N(7)-methylguanosine(46) in tRNA + S-adenosyl-L-homocysteine. It participates in tRNA modification; N(7)-methylguanine-tRNA biosynthesis. In terms of biological role, catalyzes the formation of N(7)-methylguanine at position 46 (m7G46) in tRNA. This chain is tRNA (guanine-N(7)-)-methyltransferase, found in Helicobacter pylori (strain HPAG1).